The primary structure comprises 594 residues: Cationic amino acid transporter 1 (594 aa).

Ala2 bears the N-acetylalanine mark. Residues 2–78 (ASGGGDDGLR…EMKKTLTWWD (77 aa)) are Cytoplasmic-facing. The chain crosses the membrane as a helical span at residues 79–99 (LMWFGIGAVIGSGIFVLTGLE). Residues 100–104 (ARNHS) are Extracellular-facing. A glycan (N-linked (GlcNAc...) asparagine) is linked at Asn102. A helical transmembrane segment spans residues 105–125 (GPAVVLSYVVSGVSAMLSVFC). Topologically, residues 126 to 149 (YTEFAVEIPVAGGSFAYLRVELGD) are cytoplasmic. Residues 150–170 (FMAFIAAGNIILEYVVGGAAV) form a helical membrane-spanning segment. The Extracellular portion of the chain corresponds to 171–201 (ARSWTSYFATLLNHKPEDFRIIVHKLGEDYS). Residues 202 to 222 (HLDPIAVGVCAIICVLAVVGT) traverse the membrane as a helical segment. Residues 223–227 (KGSSR) lie on the Cytoplasmic side of the membrane. The helical transmembrane segment at 228–248 (FNYIASIIHMVVILFVIIAGF) threads the bilayer. Topologically, residues 249–266 (TKADVKNYSDFTPYGVRG) are extracellular. N-linked (GlcNAc...) asparagine glycosylation occurs at Asn255. The chain crosses the membrane as a helical span at residues 267 to 287 (VFKSAAVLFFAYIGFDAVSTM). Residues 288 to 297 (AEETKNPGRD) are Cytoplasmic-facing. The chain crosses the membrane as a helical span at residues 298 to 318 (IPIGLVGSMVVTTVCYCLMAV). At 319-348 (TLCLMQPYQQIDPDAPFSVAFSAVGWDWAK) the chain is on the extracellular side. Residues 349–369 (YIVAFGALKGMTTVLLVGAIG) form a helical membrane-spanning segment. The Cytoplasmic segment spans residues 370–393 (QARYMTHIARAHMMPPWLAQVNAK). Residues 394 to 414 (TGTPINATVVMLAATALIAFF) form a helical membrane-spanning segment. The Extracellular portion of the chain corresponds to 415-418 (TKLK). The chain crosses the membrane as a helical span at residues 419–439 (ILADLLSVSTLFIFMFVAVAL). The Cytoplasmic segment spans residues 440-457 (LVRRYYVTGETSTRDRNK). A helical membrane pass occupies residues 458–478 (FLVFLGLILASSTATAVYWAL). The Extracellular segment spans residues 479–483 (EEEGW). Residues 484–504 (IGYCITVPIWFLSTVAMKFLV) traverse the membrane as a helical segment. Over 505 to 511 (PQARAPK) the chain is Cytoplasmic. Residues 512–532 (IWGVPLVPWLPSASIAINIFL) form a helical membrane-spanning segment. The Extracellular segment spans residues 533-543 (LGSIDTKSFVR). The helical transmembrane segment at 544–564 (FAIWTGILLIYYVLFGLHATY) threads the bilayer. The Cytoplasmic portion of the chain corresponds to 565 to 594 (DTAKATLKEKQALQKAEEGGVVADNSCSAT).

This sequence belongs to the amino acid-polyamine-organocation (APC) superfamily. Cationic amino acid transporter (CAT) (TC 2.A.3.3) family. Expressed in roots, stems, flowers, petioles, seeds, siliques, and leaves. Mostly present in major veins.

It is found in the membrane. Its activity is regulated as follows. Inhibited by the protonophore 2,4-dinitrophenol. Its function is as follows. High-affinity permease involved in the transport of the cationic amino acids (e.g. arginine, lysine, histidine, citrulline, valine, and glutamate). Transport mostly basic amino acids, and, to a lower extent neutral and acidic amino acids. May function as a proton symporter. This is Cationic amino acid transporter 1 (CAT1) from Arabidopsis thaliana (Mouse-ear cress).